We begin with the raw amino-acid sequence, 326 residues long: Apoptosis facilitator Bcl-2-like protein 14 (326 aa).

Position 44 is a phosphoserine (S44). A disordered region spans residues 99-127; sequence TEKEEEPPSSPKEIHAQGPFPVERQGRNQ. Residues 211-225 carry the BH3 motif; it reads IVELLKYSGDQLGRE. Positions 307–314 match the BH2 motif; that stretch reads WVQQNGGW.

Belongs to the Bcl-2 family. In terms of processing, phosphorylated by MELK, leading to inhibit its pro-apoptotic function.

It is found in the cytoplasm. Functionally, plays a role in apoptosis. In Rattus norvegicus (Rat), this protein is Apoptosis facilitator Bcl-2-like protein 14 (Bcl2l14).